Consider the following 271-residue polypeptide: 2,3,4,5-tetrahydropyridine-2,6-dicarboxylate N-succinyltransferase (271 aa).

Substrate is bound by residues arginine 102 and aspartate 139.

This sequence belongs to the transferase hexapeptide repeat family. As to quaternary structure, homotrimer.

Its subcellular location is the cytoplasm. It carries out the reaction (S)-2,3,4,5-tetrahydrodipicolinate + succinyl-CoA + H2O = (S)-2-succinylamino-6-oxoheptanedioate + CoA. Its pathway is amino-acid biosynthesis; L-lysine biosynthesis via DAP pathway; LL-2,6-diaminopimelate from (S)-tetrahydrodipicolinate (succinylase route): step 1/3. The polypeptide is 2,3,4,5-tetrahydropyridine-2,6-dicarboxylate N-succinyltransferase (Coxiella burnetii (strain Dugway 5J108-111)).